A 131-amino-acid chain; its full sequence is Putative gamma-taxilin 2 (131 aa).

Belongs to the taxilin family. In terms of tissue distribution, ubiquitously expressed.

In Homo sapiens (Human), this protein is Putative gamma-taxilin 2 (TXLNGY).